The primary structure comprises 1408 residues: ARF guanine-nucleotide exchange factor 1 (1408 aa).

Position 49 is a phosphoserine (S49). The disordered stretch occupies residues 262 to 287 (TTTSDNDLSSTDDDSAVADDNKNEKP). Residues 552 to 706 (FNEKAKKGIQ…IIMLNTDSHN (155 aa)) enclose the SEC7 domain.

As to quaternary structure, interacts (via N-terminal region) with SEC21 (via C-terminus). Interacts with GMH1. Interacts with DRS2.

Its subcellular location is the cytoplasm. It localises to the cytosol. It is found in the membrane. The protein localises to the endoplasmic reticulum. The protein resides in the mitochondrion. In terms of biological role, activates the ARF proteins by exchanging bound GDP for free GTP. Plays a role in maintaining mitochondrial morphology, and in the turnover of mitochondria through mitophagy. The sequence is that of ARF guanine-nucleotide exchange factor 1 (GEA1) from Saccharomyces cerevisiae (strain ATCC 204508 / S288c) (Baker's yeast).